The chain runs to 644 residues: Acetyl-coenzyme A synthetase 2 (644 aa).

CoA contacts are provided by residues 189-192, threonine 307, and asparagine 331; that span reads RGGK. ATP is bound by residues 383-385, 407-412, aspartate 496, and arginine 511; these read GEP and DTWWQT. A CoA-binding site is contributed by serine 519. Residue arginine 522 participates in ATP binding. Mg(2+)-binding residues include valine 533, histidine 535, and valine 538. Lysine 605 bears the N6-acetyllysine mark.

This sequence belongs to the ATP-dependent AMP-binding enzyme family. Requires Mg(2+) as cofactor. Post-translationally, acetylated. Deacetylation by the SIR2-homolog deacetylase activates the enzyme.

It catalyses the reaction acetate + ATP + CoA = acetyl-CoA + AMP + diphosphate. In terms of biological role, catalyzes the conversion of acetate into acetyl-CoA (AcCoA), an essential intermediate at the junction of anabolic and catabolic pathways. AcsA undergoes a two-step reaction. In the first half reaction, AcsA combines acetate with ATP to form acetyl-adenylate (AcAMP) intermediate. In the second half reaction, it can then transfer the acetyl group from AcAMP to the sulfhydryl group of CoA, forming the product AcCoA. The protein is Acetyl-coenzyme A synthetase 2 of Pseudomonas putida (strain ATCC 47054 / DSM 6125 / CFBP 8728 / NCIMB 11950 / KT2440).